The following is a 736-amino-acid chain: Gephyrin (736 aa).

The MPT Mo-transferase stretch occupies residues 14–166; that stretch reads QIRVGVLTVS…FILPALPHAI (153 aa). An interaction with GABARAP region spans residues 140-316; the sequence is LIINLPGSKK…VDITKVARRH (177 aa). Disordered regions lie at residues 181–232 and 260–290; these read DELE…DSSS and TASL…PKVQ. Residues 187–199 show a composition bias toward pro residues; that stretch reads PSPPPPLSPPPTT. Residues S188 and S194 each carry the phosphoserine modification. T198 is subject to Phosphothreonine. S200 carries the post-translational modification Phosphoserine. Residue C212 is the site of S-palmitoyl cysteine attachment. Residues 261-290 show a composition bias toward polar residues; that stretch reads ASLSTTPSESPRAQATSRLSTASCPTPKVQ. A Phosphoserine modification is found at S262. Residues T265 and T266 each carry the phosphothreonine modification. 2 positions are modified to phosphoserine: S268 and S270. The S-palmitoyl cysteine moiety is linked to residue C284. At S305 the chain carries Phosphoserine. The MPT adenylyltransferase stretch occupies residues 326–736; the sequence is MDKAFITVLE…VVDVMVIGRL (411 aa).

The protein in the N-terminal section; belongs to the MoaB/Mog family. It in the C-terminal section; belongs to the MoeA family. Homotrimer, homodimer and homooligomer. Interacts with GABARAP. Interacts with SRGAP2 (via SH3 domain). Interacts with GABRA3. Interacts with GLRB. GABRA3 and GLRB occupy overlapping binding sites. Interacts with ARHGAP32; IQSEC3, INSYN1 and INSYN2A. The cofactor is Mg(2+). In terms of processing, palmitoylated. Palmitoylation is stimulated by GABA type A receptors activity. Palmitoylation by ZDHHC12 regulates clustering at synapses.

The protein resides in the postsynaptic cell membrane. The protein localises to the cell membrane. It is found in the cytoplasm. Its subcellular location is the cytosol. It localises to the cytoskeleton. The protein resides in the cell projection. The protein localises to the dendrite. It is found in the postsynaptic density. The catalysed reaction is molybdopterin + ATP + H(+) = adenylyl-molybdopterin + diphosphate. It carries out the reaction adenylyl-molybdopterin + molybdate = Mo-molybdopterin + AMP + H(+). Its pathway is cofactor biosynthesis; molybdopterin biosynthesis. Its activity is regulated as follows. Inhibited by copper and tungsten. In terms of biological role, microtubule-associated protein involved in membrane protein-cytoskeleton interactions. It is thought to anchor the inhibitory glycine receptor (GLYR) to subsynaptic microtubules. Acts as a major instructive molecule at inhibitory synapses, where it also clusters GABA type A receptors. Also has a catalytic activity and catalyzes two steps in the biosynthesis of the molybdenum cofactor. In the first step, molybdopterin is adenylated. Subsequently, molybdate is inserted into adenylated molybdopterin and AMP is released. The polypeptide is Gephyrin (Homo sapiens (Human)).